The sequence spans 238 residues: uncharacterized protein (238 aa).

The N-terminal stretch at 1 to 28 (MSRNSRGSGRYVFVVLACVFGYTRAVHA) is a signal peptide.

This is an uncharacterized protein from Treponema pallidum (strain Nichols).